The chain runs to 198 residues: Peroxiredoxin-2 (198 aa).

At A2 the chain carries N-acetylalanine. A Thioredoxin domain is found at 6–164 (AHIGKPAPDF…ALRLVQAFQY (159 aa)). C51 serves as the catalytic Cysteine sulfenic acid (-SOH) intermediate. The residue at position 112 (S112) is a Phosphoserine. T182 is subject to Phosphothreonine. K196 is subject to N6-acetyllysine.

Belongs to the peroxiredoxin family. AhpC/Prx1 subfamily. Homodimer; disulfide-linked, upon oxidation. 5 homodimers assemble to form a ring-like decamer. Interacts with TIPIN. The enzyme can be inactivated by further oxidation of the cysteine sulfenic acid (C(P)-SOH) to sulphinic acid (C(P)-SO2H) instead of its condensation to a disulfide bond. It can be reactivated by forming a transient disulfide bond with sulfiredoxin SRXN1, which reduces the cysteine sulfinic acid in an ATP- and Mg-dependent manner. Post-translationally, acetylation increases resistance to transition to high molecular-mass complexes. Deacetylated by HDAC6 which decreases reducing activity.

The protein localises to the cytoplasm. The catalysed reaction is a hydroperoxide + [thioredoxin]-dithiol = an alcohol + [thioredoxin]-disulfide + H2O. Its function is as follows. Thiol-specific peroxidase that catalyzes the reduction of hydrogen peroxide and organic hydroperoxides to water and alcohols, respectively. Plays a role in cell protection against oxidative stress by detoxifying peroxides and as sensor of hydrogen peroxide-mediated signaling events. Might participate in the signaling cascades of growth factors and tumor necrosis factor-alpha by regulating the intracellular concentrations of H(2)O(2). The polypeptide is Peroxiredoxin-2 (Prdx2) (Rattus norvegicus (Rat)).